The primary structure comprises 197 residues: Peptide deformylase (197 aa).

Fe cation is bound by residues Cys106 and His148. Residue Glu149 is part of the active site. Residue His152 coordinates Fe cation.

The protein belongs to the polypeptide deformylase family. Requires Fe(2+) as cofactor.

It catalyses the reaction N-terminal N-formyl-L-methionyl-[peptide] + H2O = N-terminal L-methionyl-[peptide] + formate. Functionally, removes the formyl group from the N-terminal Met of newly synthesized proteins. Requires at least a dipeptide for an efficient rate of reaction. N-terminal L-methionine is a prerequisite for activity but the enzyme has broad specificity at other positions. The sequence is that of Peptide deformylase from Mycobacterium leprae (strain TN).